A 330-amino-acid polypeptide reads, in one-letter code: Zinc finger protein Gfi-1b (330 aa).

Residues 1–20 (MPRSFLVKSKKAHTYHQPRA) form an SNAG domain region. 2 disordered regions span residues 1–21 (MPRSFLVKSKKAHTYHQPRAQ) and 75–99 (MASAPEGPLVTPQPQDGESPLSESP). The residue at position 8 (Lys-8) is an N6,N6-dimethyllysine. Residues 91-330 (GESPLSESPP…RHRESQHNLK (240 aa)) are interaction with ARIH2. 6 consecutive C2H2-type zinc fingers follow at residues 163–186 (YHCVKCNKVFSTPHGLEVHVRRSH), 192–214 (FACDVCGKTFGHAVSLEQHTHVH), 220–242 (FECRMCGKAFKRSSTLSTHLLIH), 248–270 (YPCQFCGKRFHQKSDMKKHTYIH), 276–298 (HKCQVCGKAFSQSSNLITHSRKH), and 304–327 (FSCELCTKGFQRKVDLRRHRESQH). A mediates interaction with GATA1 region spans residues 164–330 (HCVKCNKVFS…RHRESQHNLK (167 aa)).

As to quaternary structure, interacts with histone methyltransferases EHMT2 and SUV39H1. Interacts with ARIH2 (via RING-type 2) and with RUNX1T1. Forms a complex with GATA1. Component of a RCOR-GFI-KDM1A-HDAC complex. Interacts directly with RCOR1, KDM1A and HDAC2. Post-translationally, methylation at Lys-8 in the SNAG domain seems required for the recruitment of the corepressor complex. Expressed in bone marrow and in spleen. Detected in hematopoietic stem cells, erythroblasts, and megakaryocytes. Expressed in thymocytes.

The protein localises to the nucleus. Essential proto-oncogenic transcriptional regulator necessary for development and differentiation of erythroid and megakaryocytic lineages. Component of a RCOR-GFI-KDM1A-HDAC complex that suppresses, via histone deacetylase (HDAC) recruitment, a number of genes implicated in multilineage blood cell development and controls hematopoietic differentiation. Transcriptional repressor or activator depending on both promoter and cell type context; represses promoter activity of SOCS1 and SOCS3 and thus, may regulate cytokine signaling pathways. Cooperates with GATA1 to repress target gene transcription, such as the apoptosis regulator BCL2L1; GFI1B silencing in leukemic cell lines markedly increase apoptosis rate. Inhibits down-regulation of MYC and MYB as well as the cyclin-dependent kinase inhibitor CDKN1A/P21WAF1 in IL6-treated myelomonocytic cells. Represses expression of GATA3 in T-cell lymphomas and inhibits GATA1-mediated transcription; as GATA1 also mediates erythroid GFI1B transcription, both GATA1 and GFI1B participate in a feedback regulatory pathway controlling the expression of GFI1B gene in erythroid cells. Suppresses GATA1-mediated stimulation of GFI1B promoter through protein interaction. Binds to gamma-satellite DNA and to its own promoter, auto-repressing its own expression. Alters histone methylation by recruiting histone methyltransferase to target genes promoters. Plays a role in heterochromatin formation. The protein is Zinc finger protein Gfi-1b (Gfi1b) of Mus musculus (Mouse).